A 192-amino-acid polypeptide reads, in one-letter code: Probable nicotinate-nucleotide adenylyltransferase (192 aa).

It belongs to the NadD family.

The catalysed reaction is nicotinate beta-D-ribonucleotide + ATP + H(+) = deamido-NAD(+) + diphosphate. Its pathway is cofactor biosynthesis; NAD(+) biosynthesis; deamido-NAD(+) from nicotinate D-ribonucleotide: step 1/1. Functionally, catalyzes the reversible adenylation of nicotinate mononucleotide (NaMN) to nicotinic acid adenine dinucleotide (NaAD). This chain is Probable nicotinate-nucleotide adenylyltransferase, found in Rhizobium etli (strain ATCC 51251 / DSM 11541 / JCM 21823 / NBRC 15573 / CFN 42).